The primary structure comprises 258 residues: Imidazole glycerol phosphate synthase subunit HisF (258 aa).

Active-site residues include Asp-11 and Asp-130.

The protein belongs to the HisA/HisF family. In terms of assembly, heterodimer of HisH and HisF.

It localises to the cytoplasm. It catalyses the reaction 5-[(5-phospho-1-deoxy-D-ribulos-1-ylimino)methylamino]-1-(5-phospho-beta-D-ribosyl)imidazole-4-carboxamide + L-glutamine = D-erythro-1-(imidazol-4-yl)glycerol 3-phosphate + 5-amino-1-(5-phospho-beta-D-ribosyl)imidazole-4-carboxamide + L-glutamate + H(+). It participates in amino-acid biosynthesis; L-histidine biosynthesis; L-histidine from 5-phospho-alpha-D-ribose 1-diphosphate: step 5/9. Its function is as follows. IGPS catalyzes the conversion of PRFAR and glutamine to IGP, AICAR and glutamate. The HisF subunit catalyzes the cyclization activity that produces IGP and AICAR from PRFAR using the ammonia provided by the HisH subunit. The sequence is that of Imidazole glycerol phosphate synthase subunit HisF from Bradyrhizobium sp. (strain BTAi1 / ATCC BAA-1182).